A 106-amino-acid polypeptide reads, in one-letter code: BLOC-1-related complex subunit 7 (106 aa).

Belongs to the BORCS7 family. Component of the BLOC-one-related complex (BORC) which is composed of BLOC1S1, BLOC1S2, BORCS5, BORCS6, BORCS7, BORCS8, KXD1 and SNAPIN.

The protein resides in the lysosome membrane. Functionally, as part of the BORC complex may play a role in lysosomes movement and localization at the cell periphery. Associated with the cytosolic face of lysosomes, the BORC complex may recruit ARL8B and couple lysosomes to microtubule plus-end-directed kinesin motor. This Homo sapiens (Human) protein is BLOC-1-related complex subunit 7.